Reading from the N-terminus, the 337-residue chain is Glucokinase (337 aa).

11–16 contributes to the ATP binding site; that stretch reads ADIGGT.

Belongs to the bacterial glucokinase family.

The protein localises to the cytoplasm. The enzyme catalyses D-glucose + ATP = D-glucose 6-phosphate + ADP + H(+). The polypeptide is Glucokinase (Xylella fastidiosa (strain M23)).